A 455-amino-acid chain; its full sequence is Serine--tRNA ligase (455 aa).

252 to 254 (TAE) is an L-serine binding site. Residues 283-285 (RKE) and valine 299 contribute to the ATP site. Glutamate 306 contacts L-serine. 370–373 (EVVS) serves as a coordination point for ATP. Position 406 (threonine 406) interacts with L-serine.

This sequence belongs to the class-II aminoacyl-tRNA synthetase family. Type-1 seryl-tRNA synthetase subfamily. Homodimer. The tRNA molecule binds across the dimer.

The protein resides in the cytoplasm. It catalyses the reaction tRNA(Ser) + L-serine + ATP = L-seryl-tRNA(Ser) + AMP + diphosphate + H(+). The catalysed reaction is tRNA(Sec) + L-serine + ATP = L-seryl-tRNA(Sec) + AMP + diphosphate + H(+). Its pathway is aminoacyl-tRNA biosynthesis; selenocysteinyl-tRNA(Sec) biosynthesis; L-seryl-tRNA(Sec) from L-serine and tRNA(Sec): step 1/1. Functionally, catalyzes the attachment of serine to tRNA(Ser). Is also able to aminoacylate tRNA(Sec) with serine, to form the misacylated tRNA L-seryl-tRNA(Sec), which will be further converted into selenocysteinyl-tRNA(Sec). The sequence is that of Serine--tRNA ligase from Pyrococcus horikoshii (strain ATCC 700860 / DSM 12428 / JCM 9974 / NBRC 100139 / OT-3).